The chain runs to 295 residues: Protein U26 (295 aa).

8 helical membrane passes run 4 to 24 (LTDS…LYTF), 31 to 51 (SPLG…LTFK), 66 to 86 (IVFL…VVMI), 103 to 123 (VMIM…SLFF), 183 to 203 (FTVE…FLSM), 218 to 238 (VFFK…ILSG), 243 to 263 (VCLY…SIML), and 274 to 294 (FYAG…MYFG).

The protein resides in the membrane. The protein is Protein U26 (U26) of Human herpesvirus 6A (strain Uganda-1102) (HHV-6 variant A).